A 126-amino-acid polypeptide reads, in one-letter code: uncharacterized protein (126 aa).

The protein belongs to the SufE family.

This is an uncharacterized protein from Haemophilus influenzae (strain ATCC 51907 / DSM 11121 / KW20 / Rd).